A 487-amino-acid chain; its full sequence is UDP-N-acetylmuramate--L-alanine ligase (487 aa).

Residue 129–135 (GTHGKTT) participates in ATP binding.

Belongs to the MurCDEF family.

It localises to the cytoplasm. The enzyme catalyses UDP-N-acetyl-alpha-D-muramate + L-alanine + ATP = UDP-N-acetyl-alpha-D-muramoyl-L-alanine + ADP + phosphate + H(+). It functions in the pathway cell wall biogenesis; peptidoglycan biosynthesis. Functionally, cell wall formation. The protein is UDP-N-acetylmuramate--L-alanine ligase of Aliivibrio fischeri (strain ATCC 700601 / ES114) (Vibrio fischeri).